A 154-amino-acid chain; its full sequence is Insulin-like peptide 1 (154 aa).

The first 29 residues, 1 to 29, serve as a signal peptide directing secretion; sequence MFSQHNGAAVHGLRLQSLLIAAMLTAAMA. 3 cysteine pairs are disulfide-bonded: Cys49/Cys138, Cys61/Cys151, and Cys137/Cys142. A disordered region spans residues 72 to 92; that stretch reads RESLLGNSDDDEDTEQEVQDD. The propeptide at 73 to 122 is connecting peptide; it reads ESLLGNSDDDEDTEQEVQDDSSMWQTLDGAGYSFSPLLTNLYGSEVLIKM. Residues 79–91 show a composition bias toward acidic residues; that stretch reads SDDDEDTEQEVQD.

Belongs to the insulin family. In terms of assembly, heterodimer of a B chain and an A chain linked by two disulfide bonds.

It localises to the secreted. In terms of biological role, possible ligand of InR/insulin-like receptor. This chain is Insulin-like peptide 1, found in Drosophila melanogaster (Fruit fly).